A 406-amino-acid polypeptide reads, in one-letter code: Histone-lysine N-methyltransferase SUV39H2 (406 aa).

Residues 43–101 form the Chromo domain; the sequence is YEVEYLCDYRIEKGVEKFFVKWKGWPESCNTWEPTRNLKCPTLLKQFYSDLYNYFCALK. Residues 185-243 form the Pre-SET domain; sequence VGCDCSDCFKGKCCPTEAGVLFAYNEHRQIKIPPGRPIYECNSRCKCGPDCPNRVVQKG. Zn(2+) is bound by residues Cys-187, Cys-189, Cys-192, Cys-197, Cys-198, Cys-225, Cys-229, Cys-231, and Cys-235. The SET domain occupies 246-369; sequence YSLCIFRTDN…AGEELTFDYQ (124 aa). S-adenosyl-L-methionine contacts are provided by residues 257-259, Tyr-300, and 326-327; these read RGW and NH. Zn(2+)-binding residues include Cys-329, Cys-394, Cys-396, and Cys-401. Positions 390–406 constitute a Post-SET domain; the sequence is VRIACKCGAATCRGYLN.

It belongs to the class V-like SAM-binding methyltransferase superfamily. Histone-lysine methyltransferase family. Suvar3-9 subfamily.

Its subcellular location is the nucleus. It is found in the chromosome. It localises to the centromere. The catalysed reaction is L-lysyl(9)-[histone H3] + 3 S-adenosyl-L-methionine = N(6),N(6),N(6)-trimethyl-L-lysyl(9)-[histone H3] + 3 S-adenosyl-L-homocysteine + 3 H(+). In terms of biological role, histone methyltransferase that specifically trimethylates 'Lys-9' of histone H3 using monomethylated H3 'Lys-9' as substrate. H3 'Lys-9' trimethylation represents a specific tag for epigenetic transcriptional repression by recruiting HP1 (CBX1, CBX3 and/or CBX5) proteins to methylated histones. Mainly functions in heterochromatin regions, thereby playing a central role in the establishment of constitutive heterochromatin at pericentric and telomere regions. H3 'Lys-9' trimethylation is also required to direct DNA methylation at pericentric repeats. SUV39H1 is targeted to histone H3 via its interaction with RB1 and is involved in many processes. This is Histone-lysine N-methyltransferase SUV39H2 (suv39h2) from Xenopus tropicalis (Western clawed frog).